Here is a 517-residue protein sequence, read N- to C-terminus: L-amino-acid oxidase (517 aa).

The first 18 residues, Met-1–Cys-18, serve as a signal peptide directing secretion. A disulfide bond links Cys-29 and Cys-192. FAD-binding positions include Met-62–Ala-63, Glu-82–Ala-83, Arg-90, and Gly-106–Arg-109. Residue Arg-109 participates in substrate binding. N-linked (GlcNAc...) asparagine glycosylation occurs at Asn-191. Val-280 serves as a coordination point for FAD. Residues Cys-350 and Cys-431 are joined by a disulfide bond. Tyr-391 provides a ligand contact to substrate. FAD is bound by residues Glu-476 and Gly-483–Thr-488. Gly-483 to Trp-484 is a substrate binding site.

It belongs to the flavin monoamine oxidase family. FIG1 subfamily. In terms of assembly, homodimer; non-covalently linked. It depends on FAD as a cofactor. Post-translationally, N-glycosylated. As to expression, expressed by the venom gland.

Its subcellular location is the secreted. It carries out the reaction an L-alpha-amino acid + O2 + H2O = a 2-oxocarboxylate + H2O2 + NH4(+). Functionally, catalyzes an oxidative deamination of predominantly hydrophobic and aromatic L-amino acids, thus producing hydrogen peroxide that may contribute to the diverse toxic effects of this enzyme. Exhibits diverse biological activities, such as hemorrhage, hemolysis, edema, apoptosis of vascular endothelial cells or tumor cell lines, antibacterial and antiparasitic activities, as well as regulation of platelet aggregation. Its effect on platelets is controversial, since it either induces aggregation or inhibits agonist-induced aggregation. These different effects are probably due to different experimental conditions. The polypeptide is L-amino-acid oxidase (Demansia vestigiata (Lesser black whip snake)).